Reading from the N-terminus, the 256-residue chain is Fat body protein 2 (256 aa).

NAD(+) is bound at residue 10–34; that stretch reads VYVGSFSGIGWQMMMQLMQKDIKMM. Serine 138 contacts substrate. The active-site Proton acceptor is the tyrosine 151.

This sequence belongs to the short-chain dehydrogenases/reductases (SDR) family.

The chain is Fat body protein 2 (Fbp2) from Drosophila melanogaster (Fruit fly).